The sequence spans 188 residues: Auxin-induced protein 22C (188 aa).

Residues 13-17 carry the EAR-like (transcriptional repression) motif; that stretch reads LRLGL. Positions 16–57 are disordered; the sequence is GLPGAGGENNTDKDKNKNKKRVFSDIEGENSSSEEDGKKETK. A PB1 domain is found at 79–167; sequence KLYVKVSMDG…KRLRIMKRSD (89 aa).

The protein belongs to the Aux/IAA family. In terms of assembly, homodimers and heterodimers.

The protein resides in the nucleus. Functionally, aux/IAA proteins are short-lived transcriptional factors that function as repressors of early auxin response genes at low auxin concentrations. Repression is thought to result from the interaction with auxin response factors (ARFs), proteins that bind to the auxin-responsive promoter element (AuxRE). Formation of heterodimers with ARF proteins may alter their ability to modulate early auxin response genes expression. The chain is Auxin-induced protein 22C (AUX22C) from Vigna radiata var. radiata (Mung bean).